Reading from the N-terminus, the 310-residue chain is Porphobilinogen deaminase (310 aa).

Residue Cys242 is modified to S-(dipyrrolylmethanemethyl)cysteine.

It belongs to the HMBS family. As to quaternary structure, monomer. Requires dipyrromethane as cofactor.

It carries out the reaction 4 porphobilinogen + H2O = hydroxymethylbilane + 4 NH4(+). The protein operates within porphyrin-containing compound metabolism; protoporphyrin-IX biosynthesis; coproporphyrinogen-III from 5-aminolevulinate: step 2/4. In terms of biological role, tetrapolymerization of the monopyrrole PBG into the hydroxymethylbilane pre-uroporphyrinogen in several discrete steps. The chain is Porphobilinogen deaminase from Shewanella baltica (strain OS223).